A 396-amino-acid chain; its full sequence is 2-(3-amino-3-carboxypropyl)histidine synthase subunit 1 (396 aa).

The [4Fe-4S] cluster site is built by C89, C194, and C323. Residues 372 to 396 (TNNNEANRPKREKRKPHIVVRTEAS) are disordered.

This sequence belongs to the DPH1/DPH2 family. DPH1 subfamily. Component of the 2-(3-amino-3-carboxypropyl)histidine synthase complex composed of dph-1, dph-2, dph-3 and a NADH-dependent reductase. [4Fe-4S] cluster is required as a cofactor.

It catalyses the reaction L-histidyl-[translation elongation factor 2] + S-adenosyl-L-methionine = 2-[(3S)-amino-3-carboxypropyl]-L-histidyl-[translation elongation factor 2] + S-methyl-5'-thioadenosine + H(+). Its pathway is protein modification; peptidyl-diphthamide biosynthesis. Catalyzes the first step of diphthamide biosynthesis, a post-translational modification of histidine which occurs in elongation factor 2. Dph-1 and dph-2 transfer a 3-amino-3-carboxypropyl (ACP) group from S-adenosyl-L-methionine (SAM) to a histidine residue, the reaction is assisted by a reduction system comprising dph-3 and a NADH-dependent reductase. The sequence is that of 2-(3-amino-3-carboxypropyl)histidine synthase subunit 1 (dph-1) from Caenorhabditis elegans.